A 262-amino-acid chain; its full sequence is Ribose-5-phosphate isomerase A (262 aa).

Substrate-binding positions include Thr-33–Thr-36, Asp-89–Asp-92, and Lys-102–Gly-105. Residue Glu-111 is the Proton acceptor of the active site. Substrate is bound at residue Lys-129.

This sequence belongs to the ribose 5-phosphate isomerase family. In terms of assembly, homodimer.

The catalysed reaction is aldehydo-D-ribose 5-phosphate = D-ribulose 5-phosphate. It functions in the pathway carbohydrate degradation; pentose phosphate pathway; D-ribose 5-phosphate from D-ribulose 5-phosphate (non-oxidative stage): step 1/1. Functionally, catalyzes the reversible conversion of ribose-5-phosphate to ribulose 5-phosphate. This is Ribose-5-phosphate isomerase A from Roseobacter denitrificans (strain ATCC 33942 / OCh 114) (Erythrobacter sp. (strain OCh 114)).